The sequence spans 20 residues: Agglutinin beta-3 chain (20 aa).

It belongs to the jacalin lectin family. As to quaternary structure, tetramer of four alpha chains associated with two or four beta chains.

D-galactose-specific lectin, binds the T-antigen structure Gal-beta1,3-GalNAc (Thomsen-Friedenreich-antigen-specific lectin). Potent and selective stimulant of distinct T- and B-cell functions. Shows a unique ability to specifically recognize IgA-1 from human serum. In Artocarpus integer (Jack fruit), this protein is Agglutinin beta-3 chain.